The chain runs to 152 residues: Superoxide dismutase [Cu-Zn] 1 (152 aa).

Residues H45, H47, and H62 each coordinate Cu cation. A disulfide bridge links C56 with C145. Residues H62, H70, H79, and D82 each coordinate Zn(2+). H119 is a binding site for Cu cation.

It belongs to the Cu-Zn superoxide dismutase family. Homodimer. Requires Cu cation as cofactor. It depends on Zn(2+) as a cofactor.

The protein resides in the cytoplasm. It carries out the reaction 2 superoxide + 2 H(+) = H2O2 + O2. In terms of biological role, destroys radicals which are normally produced within the cells and which are toxic to biological systems. The polypeptide is Superoxide dismutase [Cu-Zn] 1 (SODCC.1) (Solanum lycopersicum (Tomato)).